The chain runs to 393 residues: G protein-activated inward rectifier potassium channel 3 (393 aa).

The segment at 1 to 23 (MAQENAAFSPGQEEPPRRRGRQR) is disordered. Topologically, residues 1-57 (MAQENAAFSPGQEEPPRRRGRQRYVEKDGRCNVQQGNVRETYRYLTDLFTTLVDLQW) are cytoplasmic. Residues 58–82 (RLSLLFFVLAYALTWLFFGAIWWLI) traverse the membrane as a helical segment. The Extracellular segment spans residues 83-106 (AYGRGDLEHLEDTAWTPCVNNLNG). Positions 107–118 (FVAAFLFSIETE) form an intramembrane region, helical; Pore-forming. An intramembrane region (pore-forming) is located at residues 119-125 (TTIGYGH). Positions 120 to 125 (TIGYGH) match the Selectivity filter motif. Over 126 to 134 (RVITDQCPE) the chain is Extracellular. Residues 135 to 156 (GIVLLLLQAILGSMVNAFMVGC) traverse the membrane as a helical segment. The Cytoplasmic segment spans residues 157-393 (MFVKISQPNK…LPPPESESKV (237 aa)). Residues 360–393 (KVEEEGAGEGAGGEAGADKEQNGCLPPPESESKV) are disordered. Pro residues predominate over residues 384-393 (LPPPESESKV). The PDZ-binding signature appears at 390-393 (ESKV).

This sequence belongs to the inward rectifier-type potassium channel (TC 1.A.2.1) family. KCNJ9 subfamily. In terms of assembly, associates with KCNJ3/GIRK1 to form a G-protein-activated heteromultimer pore-forming unit. Interacts (via PDZ-binding motif) with SNX27 (via PDZ domain); the interaction is required when endocytosed to prevent degradation in lysosomes and promote recycling to the plasma membrane.

The protein resides in the membrane. It catalyses the reaction K(+)(in) = K(+)(out). In terms of biological role, inward rectifier potassium channels are characterized by a greater tendency to allow potassium to flow into the cell rather than out of it. Their voltage dependence is regulated by the concentration of extracellular potassium; as external potassium is raised, the voltage range of the channel opening shifts to more positive voltages. The inward rectification is mainly due to the blockage of outward current by internal magnesium, This receptor is controlled by G proteins. Unable to produce channel activity when expressed alone. Forms a functional channel in association with KCNJ3/GIRK1. In Homo sapiens (Human), this protein is G protein-activated inward rectifier potassium channel 3 (KCNJ9).